The following is a 319-amino-acid chain: uncharacterized protein (319 aa).

Residues 270-290 (AAALWWIPAWLAMIVEVAVLG) traverse the membrane as a helical segment.

Its subcellular location is the membrane. This is an uncharacterized protein from Mycobacterium tuberculosis (strain CDC 1551 / Oshkosh).